A 445-amino-acid chain; its full sequence is Acetylcholine-gated chloride channel subunit acc-2 (445 aa).

Positions 1 to 26 are cleaved as a signal peptide; it reads MIFTLLSTLPVLIITTELDYSELVHS. Over 27-258 the chain is Extracellular; sequence AELVSSSSYI…LHVTIIFERR (232 aa). Residues N46, N59, N121, and N162 are each glycosylated (N-linked (GlcNAc...) asparagine). C177 and C191 are disulfide-bonded. A glycan (N-linked (GlcNAc...) asparagine) is linked at N218. Residues 259–279 traverse the membrane as a helical segment; that stretch reads FIWYFMQAYLPTYLTIFISWI. Over 280-286 the chain is Cytoplasmic; it reads SFSLGSR. The helical transmembrane segment at 287–307 threads the bilayer; sequence AIPARTMLGVNSLLAIVFSFG. The Extracellular portion of the chain corresponds to 308 to 326; the sequence is NIMRNLPRVSYIKGIDVWM. A helical transmembrane segment spans residues 327 to 347; the sequence is LVSMTFIFCSLLELAIVGFMV. Over 348-407 the chain is Cytoplasmic; that stretch reads RDETVAKKKQQKKISGNISREESPHGIISERRFMFPPGCSESSKSLSSCTSGWTPERIDS. Residues 408–428 form a helical membrane-spanning segment; that stretch reads ISSVMFPFSFFVFNIIYWFYY. Over 429-445 the chain is Extracellular; the sequence is IHRKEIIKQNLINRVDG.

Belongs to the ligand-gated ion channel (TC 1.A.9) family. As to quaternary structure, homopentamer (in vitro). May interact with either acc-3 or acc-4; the interactions do not result in significant heteropentameric ion channel activity. In terms of tissue distribution, expressed in RIA, RIG, PHA and AIZ glutamatergic neurons, URX and RIH cholinergic neurons, and in male-specific MCM neurons.

Its subcellular location is the cell membrane. Functionally, acetylcholine-gated chloride channel subunit. Currents in channels are triggered in response to acetylcholine. Channel properties may be modulated by the formation of homomeric and heteromeric channels. In Caenorhabditis elegans, this protein is Acetylcholine-gated chloride channel subunit acc-2.